Consider the following 357-residue polypeptide: Phenylalanine--tRNA ligase alpha subunit (357 aa).

A Mg(2+)-binding site is contributed by Glu-257.

It belongs to the class-II aminoacyl-tRNA synthetase family. Phe-tRNA synthetase alpha subunit type 1 subfamily. As to quaternary structure, tetramer of two alpha and two beta subunits. Mg(2+) is required as a cofactor.

It is found in the cytoplasm. It carries out the reaction tRNA(Phe) + L-phenylalanine + ATP = L-phenylalanyl-tRNA(Phe) + AMP + diphosphate + H(+). The chain is Phenylalanine--tRNA ligase alpha subunit from Roseobacter denitrificans (strain ATCC 33942 / OCh 114) (Erythrobacter sp. (strain OCh 114)).